We begin with the raw amino-acid sequence, 647 residues long: DNA mismatch repair protein MutL (647 aa).

It belongs to the DNA mismatch repair MutL/HexB family.

Its function is as follows. This protein is involved in the repair of mismatches in DNA. It is required for dam-dependent methyl-directed DNA mismatch repair. May act as a 'molecular matchmaker', a protein that promotes the formation of a stable complex between two or more DNA-binding proteins in an ATP-dependent manner without itself being part of a final effector complex. The chain is DNA mismatch repair protein MutL from Bacillus cereus (strain 03BB102).